A 188-amino-acid polypeptide reads, in one-letter code: Elongation factor P (188 aa).

N6-(3,6-diaminohexanoyl)-5-hydroxylysine is present on lysine 34.

Belongs to the elongation factor P family. May be beta-lysylated on the epsilon-amino group of Lys-34 by the combined action of EpmA and EpmB, and then hydroxylated on the C5 position of the same residue by EpmC (if this protein is present). Lysylation is critical for the stimulatory effect of EF-P on peptide-bond formation. The lysylation moiety may extend toward the peptidyltransferase center and stabilize the terminal 3-CCA end of the tRNA. Hydroxylation of the C5 position on Lys-34 may allow additional potential stabilizing hydrogen-bond interactions with the P-tRNA.

It is found in the cytoplasm. Its pathway is protein biosynthesis; polypeptide chain elongation. Involved in peptide bond synthesis. Alleviates ribosome stalling that occurs when 3 or more consecutive Pro residues or the sequence PPG is present in a protein, possibly by augmenting the peptidyl transferase activity of the ribosome. Modification of Lys-34 is required for alleviation. The sequence is that of Elongation factor P from Xanthomonas oryzae pv. oryzae (strain MAFF 311018).